A 306-amino-acid polypeptide reads, in one-letter code: B- and T-lymphocyte attenuator (306 aa).

The first 29 residues, 1–29 (MKTVPAMLGTPRLFREFFILHLGLWSILC), serve as a signal peptide directing secretion. Residues 30-183 (EKATKRNDEE…ERPGRTWLLY (154 aa)) are Extracellular-facing. Positions 37 to 139 (DEECPVQLTI…SQVINSHSVT (103 aa)) constitute an Ig-like V-type domain. Cystine bridges form between C40/C69, C64/C124, and C78/C85. N-linked (GlcNAc...) asparagine glycans are attached at residues N74, N81, N101, N119, N148, and N165. The helical transmembrane segment at 184-204 (TLLPLGALLLLLACVCLLCFL) threads the bilayer. At 205–306 (KRIQGKEKKP…TEYASICVRS (102 aa)) the chain is on the cytoplasmic side.

As to quaternary structure, interacts with tyrosine phosphatases PTPN6/SHP-1 and PTPN11/SHP-2. Interacts with TNFRSF14/HVEM (via cysteine-rich domain 1). In terms of processing, phosphorylated on Tyr residues by TNFRSF14 and by antigen receptors cross-linking, both inducing association with PTPN6 and PTPN11. Post-translationally, N-glycosylated. As to expression, expressed in splenic T- and B-cells as well as lymph node tissues but very weakly in somatic tissues. Also expressed in macrophages, NK cells and dendritic cells. A polymorphic tissue distribution between several strains is seen.

It is found in the cell membrane. Its function is as follows. Inhibitory receptor on lymphocytes that negatively regulates antigen receptor signaling via PTPN6/SHP-1 and PTPN11/SHP-2. May interact in cis (on the same cell) or in trans (on other cells) with TNFRSF14. In cis interactions, appears to play an immune regulatory role inhibiting in trans interactions in naive T cells to maintain a resting state. In trans interactions, can predominate during adaptive immune response to provide survival signals to effector T cells. In Mus musculus (Mouse), this protein is B- and T-lymphocyte attenuator.